Reading from the N-terminus, the 583-residue chain is MNKLIAWIEKGKPFFEKISRNIYLRAIRDGFIAAIPIILFSSIFILITYVPNVFGFTWSKTMEGILMKPYNYTMGIVGLIVAGTTAKSLTDSYNRKLDKTNQINFISTMMAAMSGFLFLAADPIKEGGFLSAFMGTKGLLTAFISAFITVIVYNFFIKRNITIKMPKEVPPNISQVFKDIFPLSAVIIIIYALDLLSRTFIHTNVANAVLKIFEPLFTAADGWIGVTLIFGAFAFFWFVGIHGPSIVEPAIAAITYANLETNLNLIQAGEHADKIITPGTQMFVATMGGTGATLVVPFMFMWLTKSKRNKAIGRASVVPTFFGVNEPILFGAPLVLNPVFFIPFIFAPIVNVWIFKFFVDVLKMNSFSIFLPWTTPGPLGIVMGTGFAFWSFVLAIVLIVVDVMIYYPFLKVYDEQILEEERGNKEVNNELKEKVSANFDTKKADAILATAGANETTTTESAPSDEEVSAKNSSNSINEQTNVLVLCAGGGTSGLLANALNKAAEEYQVPVKAAAGGYGAHMDIMKDYQLIILAPQVASNYEDIKQDTDRLGIKLAKTQGVEYINLTRDGKAALDFVQQQFEK.

The region spanning 8 to 409 (IEKGKPFFEK…VVDVMIYYPF (402 aa)) is the PTS EIIC type-3 domain. The next 9 membrane-spanning stretches (helical) occupy residues 30–50 (GFIA…ITYV), 64–84 (GILM…VAGT), 103–123 (INFI…AADP), 137–157 (KGLL…NFFI), 176–196 (VFKD…LDLL), 222–242 (GWIG…VGIH), 283–303 (FVAT…FMWL), 339–359 (VFFI…KFFV), and 381–401 (IVMG…LIVV). Over residues 453–462 (ANETTTTESA) the composition is skewed to low complexity. The interval 453–475 (ANETTTTESAPSDEEVSAKNSSN) is disordered. Residues 480-583 (QTNVLVLCAG…LDFVQQQFEK (104 aa)) enclose the PTS EIIB type-3 domain. C487 functions as the Phosphocysteine intermediate; for EIIB activity in the catalytic mechanism. Residue C487 is modified to Phosphocysteine; by EIIA.

Its subcellular location is the cell membrane. The catalysed reaction is lactose(out) + N(pros)-phospho-L-histidyl-[protein] = lactose 6-phosphate(in) + L-histidyl-[protein]. In terms of biological role, the phosphoenolpyruvate-dependent sugar phosphotransferase system (sugar PTS), a major carbohydrate active transport system, catalyzes the phosphorylation of incoming sugar substrates concomitantly with their translocation across the cell membrane. The enzyme II LacEF PTS system is involved in lactose transport. The protein is PTS system lactose-specific EIICB component of Staphylococcus haemolyticus (strain JCSC1435).